Reading from the N-terminus, the 2551-residue chain is Piezo-type mechanosensitive ion channel component (2551 aa).

The next 8 membrane-spanning stretches (helical) occupy residues 5-25 (YACM…AALM), 27-47 (PVGI…VPLA), 56-76 (VTAF…GHIT), 106-126 (FIDL…LVFA), 204-226 (IHFE…FAAV), 231-250 (VPGG…WATC), 256-276 (GFAL…LSIV), and 320-340 (LSLD…ALAL). A disordered region spans residues 354–375 (STRKARTPQPLESGSSVAPSVT). Polar residues predominate over residues 363–375 (PLESGSSVAPSVT). The next 9 helical transmembrane spans lie at 395–415 (TTTS…GFIY), 424–444 (ILMM…LLLS), 463–483 (PFIV…GMDL), 516–536 (VPLI…RQFF), 548–568 (LADF…SYLI), 588–608 (LLVR…AITG), 611–631 (MTGF…VFQS), 639–659 (IMYG…ILIY), and 695–715 (FLHL…VHYF). Residues 731 to 741 (GSAQQKPTETT) are compositionally biased toward polar residues. The disordered stretch occupies residues 731-772 (GSAQQKPTETTALEPAPSKRRGSAGSLRKSQGPSAEAAPGAT). 12 consecutive transmembrane segments (helical) span residues 819–839 (IAAF…FVGF), 857–877 (LISF…IEYL), 910–930 (LMSL…HAVI), 973–993 (LNFG…VSTI), 994–1014 (TYRQ…LLLL), 1022–1042 (IWGV…IVLV), 1071–1091 (GALH…LVIL), 1152–1172 (VLCG…TNIA), 1174–1194 (LLAL…SDFY), 1198–1218 (IHTI…NILI), 1239–1259 (WLVH…QIML), and 1275–1295 (ITHQ…IFQL). 2 disordered regions span residues 1426–1521 (NITE…AKDS) and 1592–1658 (ESDE…PQQQ). Basic and acidic residues predominate over residues 1430–1448 (SEMKMQRRKTLYDKSKDAP). Over residues 1466 to 1477 (ATASSSASPAPT) the composition is skewed to low complexity. Residues 1497 to 1511 (QTSKETSDSKSKMEV) are compositionally biased toward basic and acidic residues. Composition is skewed to low complexity over residues 1621 to 1634 (PTST…TTTP) and 1644 to 1658 (LQPL…PQQQ). Helical transmembrane passes span 1718–1738 (ISSW…VVFI), 1741–1761 (VVNA…WGTL), 1770–1790 (FWVT…IFQF), and 1817–1837 (AHYA…RYLL). Residues 1854-1876 (FTKPTASIDERDDSDNLSQPDSR) are disordered. 7 helical membrane-spanning segments follow: residues 1937–1957 (ALMF…FTAF), 1979–1999 (IPFL…RALY), 2008–2028 (IIFH…VVPA), 2033–2053 (TFNS…YMLL), 2075–2095 (FSMV…LYEL), 2151–2171 (IMGG…LCLF), and 2431–2451 (TFSF…VLLA). The interval 2522 to 2551 (EYVDDDGDTDSIPSRMSVRRPEQLQPQQPQ) is disordered.

The protein belongs to the PIEZO (TC 1.A.75) family.

It localises to the cell membrane. Component of a mechanosensitive channel required for rapidly adapting mechanically activated (MA) currents. Plays a major role in nociception (response to strong or painful touch). Required for maintaining the mechanosensitivity of tarsal bristle mechanosensors. During their evalulation of potential egg-laying sites, females determine the softest substrate for their eggs first by making a coarse evaluation of substrate hardness using mechanosensitive channels nan and Piezo in the leg tarsal bristles, followed by a much finer assessment using nan, iav and Tmc mechanosensitive channels on the labellum. Acts in the nompC- and nan-expressing neurons of the female leg tarsals, to sense the mild differences in egg-laying substrate stiffness. In Drosophila melanogaster (Fruit fly), this protein is Piezo-type mechanosensitive ion channel component.